We begin with the raw amino-acid sequence, 222 residues long: Adenylate kinase, chloroplastic (222 aa).

A15–T20 is an ATP binding site. An NMP region spans residues S35 to V64. AMP contacts are provided by residues R41, Q62–V64, G91–R94, and Q98. An LID region spans residues G128 to D161. R129 lines the ATP pocket. R158 serves as a coordination point for AMP. A195 provides a ligand contact to ATP.

Monomer.

It is found in the plastid. Its subcellular location is the chloroplast. It catalyses the reaction AMP + ATP = 2 ADP. In terms of biological role, catalyzes the reversible transfer of the terminal phosphate group between ATP and AMP. Plays an important role in cellular energy homeostasis and in adenine nucleotide metabolism. The maize enzyme also works with CMP, albeit with 10% of the activity with AMP. The sequence is that of Adenylate kinase, chloroplastic (ADK1) from Zea mays (Maize).